The primary structure comprises 449 residues: XK-related protein 2 (449 aa).

The next 10 helical transmembrane spans lie at 35 to 55 (FSILFSTFLYCGEAASALYMV), 68 to 88 (TYTFSFFMFSSIMVQLTLIFV), 98 to 118 (LSLFMHLILLGPVIRCLEAMI), 174 to 194 (IQAFLGSVPQLTYQLYVSLIS), 204 to 224 (LMAFSLISVTYGATLCNMLAI), 241 to 261 (LCITVWRTLEITSRLVILVLF), 269 to 289 (AVPFLVLNFLIILFEPWVKFW), 306 to 326 (VGTLVVLISVTILYAGINFSC), 357 to 377 (LVENVIMVLVFKYFGVKVLLN), and 382 to 402 (LIAVQLIIAYLISIGVMLLFF).

It belongs to the XK family.

Its subcellular location is the membrane. The protein is XK-related protein 2 (Xkrx) of Mus musculus (Mouse).